A 472-amino-acid chain; its full sequence is 3-isopropylmalate dehydratase large subunit (472 aa).

Positions 352, 413, and 416 each coordinate [4Fe-4S] cluster.

It belongs to the aconitase/IPM isomerase family. LeuC type 1 subfamily. In terms of assembly, heterodimer of LeuC and LeuD. The cofactor is [4Fe-4S] cluster.

It carries out the reaction (2R,3S)-3-isopropylmalate = (2S)-2-isopropylmalate. It functions in the pathway amino-acid biosynthesis; L-leucine biosynthesis; L-leucine from 3-methyl-2-oxobutanoate: step 2/4. Functionally, catalyzes the isomerization between 2-isopropylmalate and 3-isopropylmalate, via the formation of 2-isopropylmaleate. The sequence is that of 3-isopropylmalate dehydratase large subunit from Pseudomonas fluorescens (strain ATCC BAA-477 / NRRL B-23932 / Pf-5).